Reading from the N-terminus, the 241-residue chain is Phosphoribosylformylglycinamidine synthase subunit PurQ (241 aa).

Positions N6 to A241 constitute a Glutamine amidotransferase type-1 domain. The active-site Nucleophile is the C90. Catalysis depends on residues H207 and E209.

Part of the FGAM synthase complex composed of 1 PurL, 1 PurQ and 2 PurS subunits.

It localises to the cytoplasm. It carries out the reaction N(2)-formyl-N(1)-(5-phospho-beta-D-ribosyl)glycinamide + L-glutamine + ATP + H2O = 2-formamido-N(1)-(5-O-phospho-beta-D-ribosyl)acetamidine + L-glutamate + ADP + phosphate + H(+). The enzyme catalyses L-glutamine + H2O = L-glutamate + NH4(+). It participates in purine metabolism; IMP biosynthesis via de novo pathway; 5-amino-1-(5-phospho-D-ribosyl)imidazole from N(2)-formyl-N(1)-(5-phospho-D-ribosyl)glycinamide: step 1/2. Part of the phosphoribosylformylglycinamidine synthase complex involved in the purines biosynthetic pathway. Catalyzes the ATP-dependent conversion of formylglycinamide ribonucleotide (FGAR) and glutamine to yield formylglycinamidine ribonucleotide (FGAM) and glutamate. The FGAM synthase complex is composed of three subunits. PurQ produces an ammonia molecule by converting glutamine to glutamate. PurL transfers the ammonia molecule to FGAR to form FGAM in an ATP-dependent manner. PurS interacts with PurQ and PurL and is thought to assist in the transfer of the ammonia molecule from PurQ to PurL. The polypeptide is Phosphoribosylformylglycinamidine synthase subunit PurQ (Thermosynechococcus vestitus (strain NIES-2133 / IAM M-273 / BP-1)).